The following is a 160-amino-acid chain: Cytochrome b6-f complex subunit 4 (160 aa).

Helical transmembrane passes span 36 to 56, 95 to 115, and 131 to 151; these read LLYI…GLAV, LLGI…PFIE, and TVFL…ALPI.

The protein belongs to the cytochrome b family. PetD subfamily. As to quaternary structure, the 4 large subunits of the cytochrome b6-f complex are cytochrome b6, subunit IV (17 kDa polypeptide, PetD), cytochrome f and the Rieske protein, while the 4 small subunits are PetG, PetL, PetM and PetN. The complex functions as a dimer.

It is found in the cellular thylakoid membrane. In terms of biological role, component of the cytochrome b6-f complex, which mediates electron transfer between photosystem II (PSII) and photosystem I (PSI), cyclic electron flow around PSI, and state transitions. The polypeptide is Cytochrome b6-f complex subunit 4 (Parasynechococcus marenigrum (strain WH8102)).